The sequence spans 141 residues: VLSPADKSNVKAAWGKVGGHAGDYGAEALERMFLSFPTTKTYFPHFDLSHGSAQVKGHGKKVADALTNAVAHVDDMPNALSALSDLHAHKLRVDPVNFKLLSHCLLVTLAAHHPADFTPAVHASLDKFLASVSTVLTSKYR.

A Globin domain is found at 1-141 (VLSPADKSNV…VSTVLTSKYR (141 aa)). Residue S3 is modified to Phosphoserine. K7 and K11 each carry N6-succinyllysine. At K16 the chain carries N6-acetyllysine; alternate. K16 carries the N6-succinyllysine; alternate modification. Position 24 is a phosphotyrosine (Y24). S35 is subject to Phosphoserine. An N6-succinyllysine modification is found at K40. Position 49 is a phosphoserine (S49). H58 serves as a coordination point for O2. H87 is a heme b binding site. At S102 the chain carries Phosphoserine. Residue T108 is modified to Phosphothreonine. Phosphoserine occurs at positions 124 and 131. A phosphothreonine mark is found at T134 and T137. Position 138 is a phosphoserine (S138).

Belongs to the globin family. Heterotetramer of two alpha chains and two beta chains. In terms of tissue distribution, red blood cells.

Functionally, involved in oxygen transport from the lung to the various peripheral tissues. In terms of biological role, hemopressin acts as an antagonist peptide of the cannabinoid receptor CNR1. Hemopressin-binding efficiently blocks cannabinoid receptor CNR1 and subsequent signaling. The polypeptide is Hemoglobin subunit alpha (HBA) (Saguinus oedipus (Cotton-top tamarin)).